A 418-amino-acid chain; its full sequence is Trans-acting enoyl reductase (418 aa).

Belongs to the saccharopine dehydrogenase family. Enoyl reductase subfamily.

In terms of biological role, involved in the reduction of the double bond between C-4 and C-5 during phthiocerol dimycocerosates (DIM A) and glycosylated phenolphthiocerol dimycocerosates (PGL) biosynthesis. The protein is Trans-acting enoyl reductase of Mycobacterium leprae (strain TN).